The chain runs to 99 residues: MRTLSLLTLLALTAFCLSDLAGAKPSDSESDKAFMSKQEGSKVVNRLRRYLNNGLGAPAPYPDPLEPHREVCELNPNCDELADHIGFQDAYKRIYGTTV.

A signal peptide spans 1–23 (MRTLSLLTLLALTAFCLSDLAGA). Residues 24 to 49 (KPSDSESDKAFMSKQEGSKVVNRLRR) constitute a propeptide that is removed on maturation. The region spanning 50-96 (YLNNGLGAPAPYPDPLEPHREVCELNPNCDELADHIGFQDAYKRIYG) is the Gla domain. P58 is modified (hydroxyproline). Ca(2+)-binding residues include E66, E70, E73, and D79. A 4-carboxyglutamate mark is found at E66, E70, and E73. C72 and C78 form a disulfide bridge.

The protein belongs to the osteocalcin/matrix Gla protein family. Post-translationally, gamma-carboxyglutamate residues are formed by vitamin K dependent carboxylation by GGCX. These residues are essential for the binding of calcium. Decarboxylation promotes the hormone activity.

It localises to the secreted. The carboxylated form is one of the main organic components of the bone matrix, which constitutes 1-2% of the total bone protein: it acts as a negative regulator of bone formation and is required to limit bone formation without impairing bone resorption or mineralization. The carboxylated form binds strongly to apatite and calcium. Functionally, the uncarboxylated form acts as a hormone secreted by osteoblasts, which regulates different cellular processes, such as energy metabolism, male fertility and brain development. Regulates of energy metabolism by acting as a hormone favoring pancreatic beta-cell proliferation, insulin secretion and sensitivity and energy expenditure. Uncarboxylated osteocalcin hormone also promotes testosterone production in the testes: acts as a ligand for G protein-coupled receptor GPRC6A at the surface of Leydig cells, initiating a signaling response that promotes the expression of enzymes required for testosterone synthesis in a CREB-dependent manner. Also acts as a regulator of brain development: osteocalcin hormone crosses the blood-brain barrier and acts as a ligand for GPR158 on neurons, initiating a signaling response that prevents neuronal apoptosis in the hippocampus, favors the synthesis of all monoamine neurotransmitters and inhibits that of gamma-aminobutyric acid (GABA). Osteocalcin also crosses the placenta during pregnancy and maternal osteocalcin is required for fetal brain development. The polypeptide is Osteocalcin (Bglap) (Rattus norvegicus (Rat)).